Here is a 119-residue protein sequence, read N- to C-terminus: Large ribosomal subunit protein bL19 (119 aa).

This sequence belongs to the bacterial ribosomal protein bL19 family.

Functionally, this protein is located at the 30S-50S ribosomal subunit interface and may play a role in the structure and function of the aminoacyl-tRNA binding site. The chain is Large ribosomal subunit protein bL19 from Treponema denticola (strain ATCC 35405 / DSM 14222 / CIP 103919 / JCM 8153 / KCTC 15104).